We begin with the raw amino-acid sequence, 137 residues long: Probable histone H2AXa (137 aa).

A compositionally biased stretch (gly residues) spans 1-10 (MSSSQGGGGR). Residues 1 to 21 (MSSSQGGGGRGKAKTTKAVSR) form a disordered region. Phosphoserine; by ATM and ATR is present on Ser-134. The [ST]-Q motif signature appears at 134-135 (SQ).

Belongs to the histone H2A family. As to quaternary structure, the nucleosome is a histone octamer containing two molecules each of H2A, H2B, H3 and H4 assembled in one H3-H4 heterotetramer and two H2A-H2B heterodimers. The octamer wraps approximately 147 bp of DNA. Interacts with numerous proteins required for DNA damage signaling and repair when phosphorylated on Ser-134. Post-translationally, phosphorylated to form H2AXS139ph (gamma-H2AX) in response to DNA double strand breaks (DSBs) generated by exogenous genotoxic agents and by stalled replication forks, and may also occur during meiotic recombination events. Phosphorylation can extend up to several thousand nucleosomes from the actual site of the DSB and may mark the surrounding chromatin for recruitment of proteins required for DNA damage signaling and repair. Widespread phosphorylation may also serve to amplify the damage signal or aid repair of persistent lesions. H2AXS139ph in response to ionizing radiation is mediated by ATM while defects in DNA replication induce H2AXS139ph subsequent to activation of ATR. Dephosphorylation of H2AXS139ph by PP2A is required for DNA DSB repair.

It localises to the nucleus. It is found in the chromosome. Functionally, variant histone H2A which replaces conventional H2A in a subset of nucleosomes. Nucleosomes wrap and compact DNA into chromatin, limiting DNA accessibility to the cellular machineries which require DNA as a template. Histones thereby play a central role in transcription regulation, DNA repair, DNA replication and chromosomal stability. DNA accessibility is regulated via a complex set of post-translational modifications of histones, also called histone code, and nucleosome remodeling. Required for checkpoint-mediated arrest of cell cycle progression in response to low doses of ionizing radiation and for efficient repair of DNA double strand breaks (DSBs) specifically when modified by C-terminal phosphorylation. This chain is Probable histone H2AXa, found in Oryza sativa subsp. indica (Rice).